The sequence spans 353 residues: Photosystem II D2 protein (353 aa).

The residue at position 2 (Thr2) is an N-acetylthreonine. Thr2 bears the Phosphothreonine mark. Residues 41 to 61 form a helical membrane-spanning segment; that stretch reads CAYFALGGWFTGTTFVTSWYT. A chlorophyll a-binding site is contributed by His118. A helical transmembrane segment spans residues 125–141; that stretch reads GFMLRQFELARSVQLRP. Residues Gln130 and Asn143 each coordinate pheophytin a. The helical transmembrane segment at 153–166 threads the bilayer; that stretch reads VFVSVFLIYPLGQS. His198 contributes to the chlorophyll a binding site. A helical membrane pass occupies residues 208 to 228; that stretch reads AALLCAIHGATVENTLFEDGD. Residues His215 and Phe262 each coordinate a plastoquinone. His215 contacts Fe cation. His269 is a binding site for Fe cation. A helical membrane pass occupies residues 279-295; it reads GLWMSAIGVVGLALNLR.

The protein belongs to the reaction center PufL/M/PsbA/D family. In terms of assembly, PSII is composed of 1 copy each of membrane proteins PsbA, PsbB, PsbC, PsbD, PsbE, PsbF, PsbH, PsbI, PsbJ, PsbK, PsbL, PsbM, PsbT, PsbX, PsbY, PsbZ, Psb30/Ycf12, at least 3 peripheral proteins of the oxygen-evolving complex and a large number of cofactors. It forms dimeric complexes. The D1/D2 heterodimer binds P680, chlorophylls that are the primary electron donor of PSII, and subsequent electron acceptors. It shares a non-heme iron and each subunit binds pheophytin, quinone, additional chlorophylls, carotenoids and lipids. There is also a Cl(-1) ion associated with D1 and D2, which is required for oxygen evolution. The PSII complex binds additional chlorophylls, carotenoids and specific lipids. serves as cofactor.

It localises to the plastid. The protein localises to the chloroplast thylakoid membrane. The enzyme catalyses 2 a plastoquinone + 4 hnu + 2 H2O = 2 a plastoquinol + O2. Photosystem II (PSII) is a light-driven water:plastoquinone oxidoreductase that uses light energy to abstract electrons from H(2)O, generating O(2) and a proton gradient subsequently used for ATP formation. It consists of a core antenna complex that captures photons, and an electron transfer chain that converts photonic excitation into a charge separation. The D1/D2 (PsbA/PsbD) reaction center heterodimer binds P680, the primary electron donor of PSII as well as several subsequent electron acceptors. D2 is needed for assembly of a stable PSII complex. In Welwitschia mirabilis (Tree tumbo), this protein is Photosystem II D2 protein.